Consider the following 367-residue polypeptide: Leucine-rich repeat-containing protein 28 (367 aa).

9 LRR repeats span residues 16-36, 42-63, 66-87, 89-111, 112-133, 135-156, 158-180, 181-202, and 204-226; these read KHKNLFLNYRNLHHFPLELLK, HLERLYMKRNSLTTLPENLAQK, NLVELYLHSNNIVVVPEAIGSL, KLQCLDLSDNALEIVCPEIGGLR, ALRHLRLANNQLQFLPPEVGDL, ELQTLDISSNRLLALPERLHLC, SLQYLTVDRNRLCCVPRHLCQLP, SLNELSMAGNHLASLPIDLGRS, and ELQYVYVDNNIQLKGLPSYLYNK.

The chain is Leucine-rich repeat-containing protein 28 (Lrrc28) from Mus musculus (Mouse).